Reading from the N-terminus, the 80-residue chain is Putative membrane protein insertion efficiency factor (80 aa).

Residues 61 to 80 form a disordered region; it reads KTGKDPVPDHFSLKRNQEGE. The segment covering 62–80 has biased composition (basic and acidic residues); that stretch reads TGKDPVPDHFSLKRNQEGE.

Belongs to the UPF0161 family.

It localises to the cell membrane. Could be involved in insertion of integral membrane proteins into the membrane. This chain is Putative membrane protein insertion efficiency factor, found in Streptococcus pneumoniae serotype 19F (strain G54).